Reading from the N-terminus, the 257-residue chain is HTH-type transcriptional activator mta (257 aa).

Residues 2–71 (KYQVKQVAEI…LDEIKEMLDH (70 aa)) form the HTH merR-type domain. A DNA-binding region (H-T-H motif) is located at residues 5–24 (VKQVAEISGVSIRTLHHYDN). The segment at 71–74 (HPNF) is hinge. An essential for dimerization region spans residues 76–104 (RKAALQSQKEILMKKKQRMDEMIQTIDRT). The stretch at 76 to 107 (RKAALQSQKEILMKKKQRMDEMIQTIDRTLLS) forms a coiled coil.

As to quaternary structure, homodimer.

It is found in the cytoplasm. Functionally, global transcriptional regulator that activates transcription of bmr and blt by binding directly to their promoter. Also stimulates the expression of the mta gene itself, ydfK and ymfE. This chain is HTH-type transcriptional activator mta (mta), found in Bacillus subtilis (strain 168).